Consider the following 862-residue polypeptide: DNA mismatch repair protein MutS (862 aa).

ATP is bound at residue 618–625 (GPNMGGKS). The tract at residues 799–824 (QLESRDNQASPAVASAPQQQSLSLSP) is disordered. Residues 806–824 (QASPAVASAPQQQSLSLSP) show a composition bias toward low complexity.

The protein belongs to the DNA mismatch repair MutS family.

Its function is as follows. This protein is involved in the repair of mismatches in DNA. It is possible that it carries out the mismatch recognition step. This protein has a weak ATPase activity. The sequence is that of DNA mismatch repair protein MutS from Shewanella denitrificans (strain OS217 / ATCC BAA-1090 / DSM 15013).